A 278-amino-acid chain; its full sequence is Tryptophan synthase alpha chain (278 aa).

Active-site proton acceptor residues include E50 and D61.

The protein belongs to the TrpA family. As to quaternary structure, tetramer of two alpha and two beta chains.

It carries out the reaction (1S,2R)-1-C-(indol-3-yl)glycerol 3-phosphate + L-serine = D-glyceraldehyde 3-phosphate + L-tryptophan + H2O. Its pathway is amino-acid biosynthesis; L-tryptophan biosynthesis; L-tryptophan from chorismate: step 5/5. The alpha subunit is responsible for the aldol cleavage of indoleglycerol phosphate to indole and glyceraldehyde 3-phosphate. This chain is Tryptophan synthase alpha chain, found in Afipia carboxidovorans (strain ATCC 49405 / DSM 1227 / KCTC 32145 / OM5) (Oligotropha carboxidovorans).